The primary structure comprises 213 residues: Probable glutathione S-transferase DHAR1, cytosolic (213 aa).

K8 and D19 together coordinate glutathione. The L-ascorbate site is built by K8 and D19. Positions 10–89 (AVGHPDTLGD…VIEEKYPTPS (80 aa)) constitute a GST N-terminal domain. C20 acts as the Nucleophile in catalysis. Positions 47, 60, 74, 160, and 207 each coordinate glutathione. The GST C-terminal domain occupies 73–213 (DSDVITQVIE…IAGWAPKVNA (141 aa)). K210 contributes to the L-ascorbate binding site.

The protein belongs to the GST superfamily. DHAR family. Monomer.

The protein localises to the cytoplasm. It localises to the cytosol. The enzyme catalyses RX + glutathione = an S-substituted glutathione + a halide anion + H(+). It catalyses the reaction L-dehydroascorbate + 2 glutathione = glutathione disulfide + L-ascorbate. Functionally, involved in ascorbate homeostasis. Maintains redox pools of ascorbate by recycling dihydroascorbate (DHA) to ascorbate. Involved in scavenging reactive oxygen species (ROS) under oxidative stresses. Possesses dehydroascorbate reductase (DHAR) activity in vitro. May function via a ping-pong reaction mechanism with an electron transfer at the active site. Possesses chaperone-like activity in vitro. The protein is Probable glutathione S-transferase DHAR1, cytosolic of Oryza sativa subsp. japonica (Rice).